Here is a 105-residue protein sequence, read N- to C-terminus: Protein yippee-like At4g27740 (105 aa).

A Yippee domain is found at 8–105 (PTYFCRNCEN…IEKLKLTKRY (98 aa)). Cys-12, Cys-15, Cys-68, and Cys-71 together coordinate Zn(2+).

The protein belongs to the yippee family.

The protein is Protein yippee-like At4g27740 of Arabidopsis thaliana (Mouse-ear cress).